Here is a 25-residue protein sequence, read N- to C-terminus: ATP-dependent 6-phosphofructokinase 2 (25 aa).

Residue Gly11 participates in ATP binding.

Belongs to the phosphofructokinase type A (PFKA) family. ATP-dependent PFK group I subfamily. Prokaryotic clade 'B1' sub-subfamily. As to quaternary structure, homotetramer. Requires Mg(2+) as cofactor.

Its subcellular location is the cytoplasm. It carries out the reaction beta-D-fructose 6-phosphate + ATP = beta-D-fructose 1,6-bisphosphate + ADP + H(+). The protein operates within carbohydrate degradation; glycolysis; D-glyceraldehyde 3-phosphate and glycerone phosphate from D-glucose: step 3/4. In contrast with PFK1 this enzyme is not affected by phosphoenolpyruvate. Its function is as follows. Catalyzes the phosphorylation of D-fructose 6-phosphate to fructose 1,6-bisphosphate by ATP, the first committing step of glycolysis. The polypeptide is ATP-dependent 6-phosphofructokinase 2 (pfkA2) (Thermus thermophilus (strain ATCC 27634 / DSM 579 / HB8)).